Reading from the N-terminus, the 414-residue chain is F-box protein At3g26010 (414 aa).

Residues 5–52 (NRTIHLTDAIWTEILARLPLRIIARFKSVSKTWKSTIESVYFRRLFVS) form the F-box domain.

This is F-box protein At3g26010 from Arabidopsis thaliana (Mouse-ear cress).